The following is a 624-amino-acid chain: Chaperone protein HtpG (624 aa).

Positions methionine 1–arginine 336 are a; substrate-binding. Residues glutamate 337–lysine 552 are b. The interval leucine 553–serine 624 is c.

Belongs to the heat shock protein 90 family. Homodimer.

It is found in the cytoplasm. Molecular chaperone. Has ATPase activity. The protein is Chaperone protein HtpG of Shigella flexneri.